We begin with the raw amino-acid sequence, 132 residues long: Small ribosomal subunit protein uS11 (132 aa).

Residues 1 to 16 show a composition bias toward basic residues; that stretch reads MAAGMKGKRSRRRKER. A disordered region spans residues 1 to 20; the sequence is MAAGMKGKRSRRRKERKNVE.

The protein belongs to the universal ribosomal protein uS11 family. Part of the 30S ribosomal subunit. Interacts with proteins S7 and S18. Binds to IF-3.

Functionally, located on the platform of the 30S subunit, it bridges several disparate RNA helices of the 16S rRNA. Forms part of the Shine-Dalgarno cleft in the 70S ribosome. This is Small ribosomal subunit protein uS11 from Clostridium botulinum (strain Loch Maree / Type A3).